Here is a 185-residue protein sequence, read N- to C-terminus: UPF0397 protein CPR_1556 (185 aa).

5 helical membrane passes run 11–31, 44–64, 71–91, 111–131, and 149–169; these read IVAI…GSLP, AFLS…IGFI, IVFF…VGLI, IFMF…LVAP, and GVIG…VLIS.

The protein belongs to the UPF0397 family.

Its subcellular location is the cell membrane. The sequence is that of UPF0397 protein CPR_1556 from Clostridium perfringens (strain SM101 / Type A).